Consider the following 257-residue polypeptide: Leucine-rich repeat-containing protein 3 (257 aa).

Positions 1–32 are cleaved as a signal peptide; that stretch reads MGPRGRQSPSATLAPSQGSCFFILFCLRLGAS. The LRRNT domain occupies 33 to 64; that stretch reads CPQACQCPDHAGAVAVHCSSRGLQEIPRDIPA. LRR repeat units follow at residues 65–86, 89–110, and 114–135; these read DTVLLKLDANRISRVPNGAFQH, QLRELDLSHNAIEAIGPAAFSG, and GLRLLDLSHNRIRRIPKDALGK. Residues 145 to 198 form the LRRCT domain; the sequence is NPLHCECALQEALWELKLDPDSVDEIACHTSAQEQFVGKPLIQVLDSGASFCST. Residues 205–225 traverse the membrane as a helical segment; sequence VAMLVTMFGWFTMVIAYVVYY.

It belongs to the LRRC3 family.

The protein localises to the membrane. This is Leucine-rich repeat-containing protein 3 (Lrrc3) from Mus musculus (Mouse).